The chain runs to 421 residues: Voltage-dependent calcium channel gamma-8 subunit (421 aa).

4 helical membrane-spanning segments follow: residues 19-39 (VQVL…TIAI), 127-147 (SSIF…CVAA), 157-177 (IILG…IGVI), and 207-227 (FGGL…NIYI). A phosphoserine mark is found at serine 251 and serine 254. A disordered region spans residues 271–304 (RRSRSSSRGSSEASPSRDASPGGPGGPGFASTDI). Positions 276-287 (SSRGSSEASPSR) are enriched in low complexity. The chain crosses the membrane as a helical span at residues 318–338 (VAAGLASAGGGGGGAGVGAYG). Disordered stretches follow at residues 342–363 (GAAG…GFLT) and 378–421 (VTVT…TTPV). The span at 384–397 (PAAPAPAPPAPAAP) shows a compositional bias: pro residues. Polar residues predominate over residues 408–421 (ASNTNTLNRKTTPV).

It belongs to the PMP-22/EMP/MP20 family. CACNG subfamily. In terms of assembly, interacts with CACNA1C. Identified in a complex with the L-type calcium channel subunits CACNA1C, CACNA2D1 and either CACNB1 or CACNB2. Acts as an auxiliary subunit for AMPA-selective glutamate receptors (AMPARs). Found in a complex with GRIA1, GRIA2, GRIA3, GRIA4, CNIH2, CNIH3, CACNG2, CACNG3, CACNG4, CACNG5 and CACNG7. Interacts with CNIH2. Found in a complex with GRIA1, GRIA2, GRIA3, GRIA4, DLG4 and CNIH2. Palmitoylated. Probably palmitoylated by ZDHHC3 and ZDHHC7.

It localises to the cell membrane. The protein resides in the postsynaptic density membrane. In terms of biological role, regulates the activity of L-type calcium channels that contain CACNA1C as pore-forming subunit. Regulates the trafficking and gating properties of AMPA-selective glutamate receptors (AMPARs). Promotes their targeting to the cell membrane and synapses and modulates their gating properties by slowing their rates of activation, deactivation and desensitization and by mediating their resensitization. Does not show subunit-specific AMPA receptor regulation and regulates all AMPAR subunits. Thought to stabilize the calcium channel in an inactivated (closed) state. In Rattus norvegicus (Rat), this protein is Voltage-dependent calcium channel gamma-8 subunit.